A 204-amino-acid polypeptide reads, in one-letter code: Cytochrome b6 (204 aa).

Residues 23-43 (YCLGGITLTSFLVQVATGSAM) traverse the membrane as a helical segment. Residue Cys-24 participates in heme c binding. 2 residues coordinate heme b: His-75 and His-89. The next 3 membrane-spanning stretches (helical) occupy residues 81 to 101 (MMVL…GFKK), 107 to 127 (WVTG…GYSL), and 136 to 157 (AVKI…LVEL). 2 residues coordinate heme b: His-176 and His-191. A helical membrane pass occupies residues 177-197 (TFILPLLTAVFMPMHFLMIRK).

The protein belongs to the cytochrome b family. PetB subfamily. In terms of assembly, the 4 large subunits of the cytochrome b6-f complex are cytochrome b6, subunit IV (17 kDa polypeptide, PetD), cytochrome f and the Rieske protein, while the 4 small subunits are PetG, PetL, PetM and PetN. The complex functions as a dimer. Requires heme b as cofactor. It depends on heme c as a cofactor.

Its subcellular location is the plastid. The protein resides in the chloroplast thylakoid membrane. Its function is as follows. Component of the cytochrome b6-f complex, which mediates electron transfer between photosystem II (PSII) and photosystem I (PSI), cyclic electron flow around PSI, and state transitions. The chain is Cytochrome b6 from Picea abies (Norway spruce).